A 108-amino-acid polypeptide reads, in one-letter code: Peptidyl-prolyl cis-trans isomerase FKBP1B (108 aa).

The PPIase FKBP-type domain occupies 20-108; that stretch reads GQICVVHYTG…IFDVELLNLE (89 aa).

Belongs to the FKBP-type PPIase family. FKBP1 subfamily. Identified in a complex composed of RYR2, FKBP1B, PKA catalytic subunit, PRKAR2A, AKAP6, and the protein phosphatases PP2A and PP1. Interacts directly with RYR2. Detected in heart muscle (at protein level). Ubiquitous.

Its subcellular location is the cytoplasm. The protein resides in the sarcoplasmic reticulum. The catalysed reaction is [protein]-peptidylproline (omega=180) = [protein]-peptidylproline (omega=0). With respect to regulation, inhibited by both FK506 and rapamycin. Its function is as follows. Has the potential to contribute to the immunosuppressive and toxic effects of FK506 and rapamycin. PPIases accelerate the folding of proteins. It catalyzes the cis-trans isomerization of proline imidic peptide bonds in oligopeptides. The sequence is that of Peptidyl-prolyl cis-trans isomerase FKBP1B (Fkbp1b) from Rattus norvegicus (Rat).